Consider the following 500-residue polypeptide: MENSQMWLLWGALSVALFFYFSTLRRRYAGGKPLPPGPTPLPLIGNLHLVGGGTFHHKLRDLARVHGPVMTLKLGLATNVVISSREAAIEAYTKYDRHLAARATPDTFRACGFADRSMVFIPSSDPQWKALRGIHASHVFTPRVLAAVRPIRERKVGDLIAYLRAHAGEEVLVGHAMYTGILNMVSFSYFSVDIVDMGSQMARELREVVDDIILVVGKPNVSDFYPFLRPLDLQGLRRWTTKRFNRVFSIMGDIIDRRLAHIRDNKPRHDDFLDSILELMAAGKIDRVNVLNMLFEAFVAGADTMALTLEWVMAELLKNPSVMAKARAELRDVLGDKEIVEEADAARLPYLQAVLKEAMRLHPVGALLLPHFAMEDGVEVGGYAVPKGSTVLFNAWAIMRDAAAWERPDEFVPERFVERTPQLDFRGKDVEFMPFGSGRRLCPGLPLAERVVPFILASMLHTFEWELPGGMTAEELDVSEKFKTANVLAVPLKAVPVLIK.

A helical transmembrane segment spans residues S4–L24. C442 lines the heme pocket.

Belongs to the cytochrome P450 family. Requires heme as cofactor.

It is found in the membrane. It carries out the reaction ent-cassa-12,15-diene + reduced [NADPH--hemoprotein reductase] + O2 = ent-11beta-hydroxycassa-12,15-diene + oxidized [NADPH--hemoprotein reductase] + H2O + H(+). The enzyme catalyses ent-sandaracopimaradien-3beta-ol + reduced [NADPH--hemoprotein reductase] + O2 = oryzalexin D + oxidized [NADPH--hemoprotein reductase] + H2O + H(+). Functionally, enzyme of the diterpenoid metabolism involved in the biosynthesis of both phytocassane and the oryzalexin class of phytoalexins. Can hydroxylate syn-pimaradiene, ent-pimaradiene, ent-sandaracopimaradiene, ent-isokaurene, ent-kaurene, and ent-cassadiene, but no activity with syn-stemodene, syn-stemarene, syn-labdatriene, C11-alpha-hydroxy-ent-cassadiene or syn-pimadien-19-oic acid as substrates. Hydroxylates 3-alpha-hydroxy-ent-sandaracopimaradiene at C-7-beta, resulting in a 3-alpha,7-beta-diol corresponding to oryzalexins D. The polypeptide is Oryzalexin D synthase (Oryza sativa subsp. japonica (Rice)).